The sequence spans 324 residues: Glyoxylate/hydroxypyruvate reductase B (324 aa).

Active-site residues include Arg237 and Glu266. Catalysis depends on His285, which acts as the Proton donor.

It belongs to the D-isomer specific 2-hydroxyacid dehydrogenase family. GhrB subfamily. Homodimer.

Its subcellular location is the cytoplasm. It catalyses the reaction glycolate + NADP(+) = glyoxylate + NADPH + H(+). The catalysed reaction is (R)-glycerate + NAD(+) = 3-hydroxypyruvate + NADH + H(+). It carries out the reaction (R)-glycerate + NADP(+) = 3-hydroxypyruvate + NADPH + H(+). Its function is as follows. Catalyzes the NADPH-dependent reduction of glyoxylate and hydroxypyruvate into glycolate and glycerate, respectively. This chain is Glyoxylate/hydroxypyruvate reductase B, found in Salmonella agona (strain SL483).